The following is an 88-amino-acid chain: Small ribosomal subunit protein bS18A (88 aa).

The protein belongs to the bacterial ribosomal protein bS18 family. As to quaternary structure, part of the 30S ribosomal subunit. Forms a tight heterodimer with protein bS6.

Functionally, binds as a heterodimer with protein bS6 to the central domain of the 16S rRNA, where it helps stabilize the platform of the 30S subunit. This chain is Small ribosomal subunit protein bS18A, found in Roseiflexus sp. (strain RS-1).